The primary structure comprises 315 residues: Zinc metalloproteinase nas-4 (315 aa).

The first 20 residues, 1-20, serve as a signal peptide directing secretion; the sequence is MMTIQRYSLVFCAIFATCWT. Asn-71 carries N-linked (GlcNAc...) asparagine glycosylation. The 196-residue stretch at 95–290 folds into the Peptidase M12A domain; sequence NAIKQIYRRW…RKINKLYNCP (196 aa). Disulfide bonds link Cys-137–Cys-289 and Cys-160–Cys-179. Residue His-187 participates in Zn(2+) binding. The active site involves Glu-188. Residues His-191 and His-197 each coordinate Zn(2+). The tract at residues 291–315 is disordered; that stretch reads GVSGNNNNNNNNQINSNSIVNHPQV.

Zn(2+) is required as a cofactor. Digestive tract. Found in the pharynx cells of the procorpus, metacorpus, isthmus and terminal bulb, and in the terminal bulb lumen.

Its subcellular location is the secreted. Its function is as follows. Metalloprotease. May be involved in digestion. The chain is Zinc metalloproteinase nas-4 (nas-4) from Caenorhabditis elegans.